The sequence spans 386 residues: Ribosomal RNA small subunit methyltransferase H (386 aa).

Residues 97–99 (GGH), Asp-116, Tyr-143, Asp-167, and Gln-174 contribute to the S-adenosyl-L-methionine site.

The protein belongs to the methyltransferase superfamily. RsmH family.

The protein resides in the cytoplasm. The catalysed reaction is cytidine(1402) in 16S rRNA + S-adenosyl-L-methionine = N(4)-methylcytidine(1402) in 16S rRNA + S-adenosyl-L-homocysteine + H(+). Its function is as follows. Specifically methylates the N4 position of cytidine in position 1402 (C1402) of 16S rRNA. This Mycobacterium avium (strain 104) protein is Ribosomal RNA small subunit methyltransferase H.